Here is a 316-residue protein sequence, read N- to C-terminus: Retron Ec73 putative ribosyltransferase/DNA-binding protein (316 aa).

Functionally, possible ribosyltransferase/DNA-binding component of antiviral defense system retron Ec73, composed of a non-coding RNA (ncRNA) followed by this protein then a reverse transcriptase (RT). Expression of this retron confers protection against bacteriophages SECphi4, SECphi6, SECphi27 and P1. At multiplicity of infection (MOI) of 0.02 cultures grow normally when infected with SECphi4 without collapsing, at MOI 2 cultures enter growth stasis. This chain is Retron Ec73 putative ribosyltransferase/DNA-binding protein, found in Escherichia coli.